The primary structure comprises 288 residues: Quinate/shikimate dehydrogenase (288 aa).

Substrate is bound by residues Lys71 and Asp107. NAD(+) contacts are provided by residues 132-135 (AGGA), 155-158 (NRRD), Lys205, 232-235 (CVYN), and Gly255.

The protein belongs to the shikimate dehydrogenase family. Homodimer.

It catalyses the reaction L-quinate + NAD(+) = 3-dehydroquinate + NADH + H(+). The catalysed reaction is L-quinate + NADP(+) = 3-dehydroquinate + NADPH + H(+). The enzyme catalyses shikimate + NADP(+) = 3-dehydroshikimate + NADPH + H(+). It carries out the reaction shikimate + NAD(+) = 3-dehydroshikimate + NADH + H(+). Its pathway is metabolic intermediate biosynthesis; chorismate biosynthesis; chorismate from D-erythrose 4-phosphate and phosphoenolpyruvate: step 4/7. Its function is as follows. The actual biological function of YdiB remains unclear, nor is it known whether 3-dehydroshikimate or quinate represents the natural substrate. Catalyzes the reversible NAD-dependent reduction of both 3-dehydroshikimate (DHSA) and 3-dehydroquinate to yield shikimate (SA) and quinate, respectively. It can use both NAD or NADP for catalysis, however it has higher catalytic efficiency with NAD. The chain is Quinate/shikimate dehydrogenase from Escherichia coli (strain SMS-3-5 / SECEC).